The chain runs to 453 residues: Succinate-semialdehyde dehydrogenase (acetylating) (453 aa).

188–193 (ATGGAG) is an NADP(+) binding site. Cys242 is a catalytic residue.

In terms of assembly, homodimer.

It carries out the reaction succinate semialdehyde + NADP(+) + CoA = succinyl-CoA + NADPH + H(+). Functionally, catalyzes the reduction of succinate semialdehyde to succinyl-CoA. The enzyme is specific for succinate semialdehyde and succinyl-CoA, and only shows low activity with palmitoyl-CoA. There is no activity with NAD(+) as cosubstrate. This is Succinate-semialdehyde dehydrogenase (acetylating) (sucD) from Clostridium kluyveri (strain ATCC 8527 / DSM 555 / NBRC 12016 / NCIMB 10680 / K1).